The following is a 179-amino-acid chain: Large ribosomal subunit protein uL6 (179 aa).

This sequence belongs to the universal ribosomal protein uL6 family. In terms of assembly, part of the 50S ribosomal subunit.

In terms of biological role, this protein binds to the 23S rRNA, and is important in its secondary structure. It is located near the subunit interface in the base of the L7/L12 stalk, and near the tRNA binding site of the peptidyltransferase center. This Bacillus anthracis protein is Large ribosomal subunit protein uL6.